The sequence spans 183 residues: tRNA-splicing endonuclease (183 aa).

Catalysis depends on residues Tyr-120, His-128, and Lys-159.

It belongs to the tRNA-intron endonuclease family. Archaeal short subfamily. Homotetramer; although the tetramer contains four active sites, only two participate in the cleavage. Therefore, it should be considered as a dimer of dimers.

The catalysed reaction is pretRNA = a 3'-half-tRNA molecule with a 5'-OH end + a 5'-half-tRNA molecule with a 2',3'-cyclic phosphate end + an intron with a 2',3'-cyclic phosphate and a 5'-hydroxyl terminus.. Its function is as follows. Endonuclease that removes tRNA introns. Cleaves pre-tRNA at the 5'- and 3'-splice sites to release the intron. The products are an intron and two tRNA half-molecules bearing 2',3' cyclic phosphate and 5'-OH termini. Recognizes a pseudosymmetric substrate in which 2 bulged loops of 3 bases are separated by a stem of 4 bp. In Pyrobaculum islandicum (strain DSM 4184 / JCM 9189 / GEO3), this protein is tRNA-splicing endonuclease.